Reading from the N-terminus, the 321-residue chain is Tetraacyldisaccharide 4'-kinase (321 aa).

Position 54–61 (54–61 (SVGGTGKT)) interacts with ATP.

Belongs to the LpxK family.

It carries out the reaction a lipid A disaccharide + ATP = a lipid IVA + ADP + H(+). Its pathway is glycolipid biosynthesis; lipid IV(A) biosynthesis; lipid IV(A) from (3R)-3-hydroxytetradecanoyl-[acyl-carrier-protein] and UDP-N-acetyl-alpha-D-glucosamine: step 6/6. Transfers the gamma-phosphate of ATP to the 4'-position of a tetraacyldisaccharide 1-phosphate intermediate (termed DS-1-P) to form tetraacyldisaccharide 1,4'-bis-phosphate (lipid IVA). This Rickettsia conorii (strain ATCC VR-613 / Malish 7) protein is Tetraacyldisaccharide 4'-kinase.